Consider the following 508-residue polypeptide: Aldehyde dehydrogenase family 7 member A1 (508 aa).

NAD(+) is bound at residue 244–249 (GSSKVG). The active-site Proton acceptor is E266. C300 functions as the Nucleophile in the catalytic mechanism.

The protein belongs to the aldehyde dehydrogenase family. Homotetramer.

It carries out the reaction an aldehyde + NAD(+) + H2O = a carboxylate + NADH + 2 H(+). Functionally, may play a role in fruit development. In Malus domestica (Apple), this protein is Aldehyde dehydrogenase family 7 member A1.